Reading from the N-terminus, the 484-residue chain is MKILFVASEVTPFAKTGGLADVTAALPKTLKKLGHDVRIILPFYSEVERGGHGIRKGRKSVEAVIDGVMKKGLFRHTSLGDIPVYLIENKEYFSRDNLYGTAAGEYPDNHRRFAFFCRGVLDLLKKMDFRPDVIHCHDWQTALIPLLLRREKGEDLFFSKTGVMFTIHNLAYQGLFAKETLAEMGLDSSYFTIDCLEYYGKVNLMKGAILSADLITTVSETYCREIQTPESGNGLDGVLGVRNADLHGVLNGLDYDLWDPATDRGLYKNYSVTAPAGKAVNKKGLQKLLGLEPAADVPVIGIVSRLTAQKGFDLLAELMPKFVRSRLQLVILGTGDEKYLKLLQDIKARGAGNISVNIGFHPELAPKIYAGSDIFLMPSHYEPCGLGQMIALRYGAVPLVRKTGGLADTVFDEQDGATEPNGFSFEDYTPEALWETVSRSLQAFDDKGAWKKLMKRGMSCDYSWDASARRYEELYRLALARKGR.

K15 contributes to the ADP-alpha-D-glucose binding site.

The protein belongs to the glycosyltransferase 1 family. Bacterial/plant glycogen synthase subfamily.

The enzyme catalyses [(1-&gt;4)-alpha-D-glucosyl](n) + ADP-alpha-D-glucose = [(1-&gt;4)-alpha-D-glucosyl](n+1) + ADP + H(+). It participates in glycan biosynthesis; glycogen biosynthesis. Functionally, synthesizes alpha-1,4-glucan chains using ADP-glucose. The protein is Glycogen synthase of Geotalea uraniireducens (strain Rf4) (Geobacter uraniireducens).